The primary structure comprises 224 residues: ATP synthase subunit a (224 aa).

6 helical membrane passes run 17 to 37, 78 to 98, 104 to 124, 136 to 156, 176 to 196, and 201 to 221; these read FIYM…VKMA, LVAT…VPGF, FLEF…YEGI, FLGP…VSHF, FLMV…YALL, and FLQA…AIAV.

The protein belongs to the ATPase A chain family. In terms of assembly, F-type ATPases have 2 components, CF(1) - the catalytic core - and CF(0) - the membrane proton channel. CF(1) has five subunits: alpha(3), beta(3), gamma(1), delta(1), epsilon(1). CF(0) has three main subunits: a(1), b(2) and c(9-12). The alpha and beta chains form an alternating ring which encloses part of the gamma chain. CF(1) is attached to CF(0) by a central stalk formed by the gamma and epsilon chains, while a peripheral stalk is formed by the delta and b chains.

The protein localises to the cell inner membrane. Its function is as follows. Key component of the proton channel; it plays a direct role in the translocation of protons across the membrane. This Sulfurimonas denitrificans (strain ATCC 33889 / DSM 1251) (Thiomicrospira denitrificans (strain ATCC 33889 / DSM 1251)) protein is ATP synthase subunit a.